A 102-amino-acid chain; its full sequence is Large ribosomal subunit protein P1 (102 aa).

The segment at 69–91 is disordered; the sequence is APAAAAEEKKEEEKKEEKKEEDT. Residues 74-90 are compositionally biased toward basic and acidic residues; that stretch reads AEEKKEEEKKEEKKEED.

The protein belongs to the eukaryotic ribosomal protein P1/P2 family. Part of the 50S ribosomal subunit. Homodimer, it forms part of the ribosomal stalk which helps the ribosome interact with GTP-bound translation factors. Forms a heptameric uL10/P0(P1)2(P1)2(P1)2 complex, where uL10/P0 forms an elongated spine to which the P1 dimers bind in a sequential fashion.

Its function is as follows. Forms part of the ribosomal stalk, playing a central role in the interaction of the ribosome with GTP-bound translation factors. This is Large ribosomal subunit protein P1 from Methanocaldococcus jannaschii (strain ATCC 43067 / DSM 2661 / JAL-1 / JCM 10045 / NBRC 100440) (Methanococcus jannaschii).